A 293-amino-acid chain; its full sequence is NAD kinase (293 aa).

Catalysis depends on Asp73, which acts as the Proton acceptor. NAD(+)-binding positions include 73–74, 147–148, Arg175, Asp177, and 188–193; these read DG, NE, and TAYSMS.

This sequence belongs to the NAD kinase family. Requires a divalent metal cation as cofactor.

The protein localises to the cytoplasm. It catalyses the reaction NAD(+) + ATP = ADP + NADP(+) + H(+). Functionally, involved in the regulation of the intracellular balance of NAD and NADP, and is a key enzyme in the biosynthesis of NADP. Catalyzes specifically the phosphorylation on 2'-hydroxyl of the adenosine moiety of NAD to yield NADP. This Colwellia psychrerythraea (strain 34H / ATCC BAA-681) (Vibrio psychroerythus) protein is NAD kinase.